The chain runs to 240 residues: Large ribosomal subunit protein uL2 (240 aa).

Residues 1-11 (MGKRLISQNRG) are compositionally biased toward polar residues. Disordered stretches follow at residues 1–25 (MGKR…HKRK) and 207–240 (GGRH…TGKR). Basic residues-rich tracts occupy residues 13–25 (GTPK…HKRK) and 224–240 (SPGR…TGKR).

It belongs to the universal ribosomal protein uL2 family. As to quaternary structure, part of the 50S ribosomal subunit. Forms a bridge to the 30S subunit in the 70S ribosome.

Functionally, one of the primary rRNA binding proteins. Required for association of the 30S and 50S subunits to form the 70S ribosome, for tRNA binding and peptide bond formation. It has been suggested to have peptidyltransferase activity; this is somewhat controversial. Makes several contacts with the 16S rRNA in the 70S ribosome. The chain is Large ribosomal subunit protein uL2 from Methanococcus maripaludis (strain DSM 14266 / JCM 13030 / NBRC 101832 / S2 / LL).